A 371-amino-acid polypeptide reads, in one-letter code: Ribosomal RNA small subunit methyltransferase H (371 aa).

Residues 92–94 (GGH), Asp111, Tyr138, Asp159, and Gln166 contribute to the S-adenosyl-L-methionine site.

The protein belongs to the methyltransferase superfamily. RsmH family.

The protein resides in the cytoplasm. The enzyme catalyses cytidine(1402) in 16S rRNA + S-adenosyl-L-methionine = N(4)-methylcytidine(1402) in 16S rRNA + S-adenosyl-L-homocysteine + H(+). Functionally, specifically methylates the N4 position of cytidine in position 1402 (C1402) of 16S rRNA. This Mycolicibacterium gilvum (strain PYR-GCK) (Mycobacterium gilvum (strain PYR-GCK)) protein is Ribosomal RNA small subunit methyltransferase H.